A 126-amino-acid polypeptide reads, in one-letter code: Large ribosomal subunit protein bL12 (126 aa).

The protein belongs to the bacterial ribosomal protein bL12 family. In terms of assembly, homodimer. Part of the ribosomal stalk of the 50S ribosomal subunit. Forms a multimeric L10(L12)X complex, where L10 forms an elongated spine to which 2 to 4 L12 dimers bind in a sequential fashion. Binds GTP-bound translation factors.

Functionally, forms part of the ribosomal stalk which helps the ribosome interact with GTP-bound translation factors. Is thus essential for accurate translation. This Methylorubrum populi (strain ATCC BAA-705 / NCIMB 13946 / BJ001) (Methylobacterium populi) protein is Large ribosomal subunit protein bL12.